The primary structure comprises 464 residues: Trigger factor (464 aa).

A PPIase FKBP-type domain is found at 162–243; it reads GDFISIDLSA…VGTVKERELP (82 aa). The tract at residues 435–464 is disordered; sequence ELFGNGEAETEEAASTDEAASDSTESEDQK.

The protein belongs to the FKBP-type PPIase family. Tig subfamily.

It localises to the cytoplasm. The enzyme catalyses [protein]-peptidylproline (omega=180) = [protein]-peptidylproline (omega=0). Functionally, involved in protein export. Acts as a chaperone by maintaining the newly synthesized protein in an open conformation. Functions as a peptidyl-prolyl cis-trans isomerase. The sequence is that of Trigger factor from Rhodococcus jostii (strain RHA1).